A 277-amino-acid polypeptide reads, in one-letter code: MADDLGNEWWEEPAGDASNSEPAEEVKESEESKGNKKKKIPSGKTQVKRKKEVKVSQEAEKEDSAPKKKRRKKKTISDVLAQHAPTAGTPEDMQKLVLEHFENKRSVIELEELQIPDTCFVKENDLTHTLSSYLKEICPKWSKLSKNHKEKKSVLLLVVCSSAHRTLELIKLINAFKADTKVMKLFAKHIKIKDQINLLEKNVTHIGIGTPGRIKALIDQDGLSLESMKYLVFDWNWRDQKLRRMMDIPEVKKETLELLDSGLIRASRAGTLKIGLF.

Acidic residues predominate over residues 1–14 (MADDLGNEWWEEPA). The disordered stretch occupies residues 1–91 (MADDLGNEWW…QHAPTAGTPE (91 aa)). Basic and acidic residues predominate over residues 24–34 (EEVKESEESKG). Residues 35–52 (NKKKKIPSGKTQVKRKKE) show a composition bias toward basic residues. Basic and acidic residues predominate over residues 53 to 66 (VKVSQEAEKEDSAP).

It belongs to the CMS1 family.

The chain is Protein CMSS1 (cmss1) from Xenopus laevis (African clawed frog).